The primary structure comprises 1141 residues: Translocase of chloroplast 125, chloroplastic (1141 aa).

Disordered regions lie at residues 1–177 (MDAL…ISGY) and 325–431 (GFVE…EANE). Composition is skewed to basic and acidic residues over residues 57–72 (RVPE…KRDG) and 107–121 (IDGR…REDL). The span at 132-150 (YDDDDDDEEEEEDGSEEGE) shows a compositional bias: acidic residues. Residues 151–167 (STSSSIINSEYSSSASN) are compositionally biased toward low complexity. Over residues 328–353 (EAEEAESDVFTEGEDGYDDEDEDGDI) the composition is skewed to acidic residues. Low complexity-rich tracts occupy residues 389-401 (RSSA…TTAT) and 408-429 (TASS…SSEA). An AIG1-type G domain is found at 505 to 734 (DFACTILVLG…KLQEASTPGK (230 aa)). The segment at 514–521 (GKTGVGKS) is G1. GTP is bound at residue 517-522 (GVGKSA). S521 provides a ligand contact to Mg(2+). Residues 541-545 (STTKV) are G2. The tract at residues 561-564 (DTPG) is G3. Positions 633–636 (THAS) are G4. GTP-binding positions include H634 and 682–683 (EN). Positions 682–684 (ENH) are G5. Disordered regions lie at residues 758–795 (QLKM…PFRP) and 832–871 (IRRR…AVPM). A compositionally biased stretch (acidic residues) spans 770–789 (EDSDDDSDEEDEEEGDEYDD). Over residues 832-841 (IRRRRERKKQ) the composition is skewed to basic residues. A helical transmembrane segment spans residues 1116–1136 (MVLIGIVPILRSLINCRFGFG).

The protein belongs to the TRAFAC class TrmE-Era-EngA-EngB-Septin-like GTPase superfamily. AIG1/Toc34/Toc159-like paraseptin GTPase family. TOC159 subfamily. Part of the TOC core complex. Mg(2+) is required as a cofactor.

Its subcellular location is the plastid. It is found in the chloroplast outer membrane. Its function is as follows. GTPase involved in protein precursor import into chloroplasts. Seems to recognize chloroplast-destined precursor proteins and regulate their presentation to the translocation channel through GTP hydrolysis. Probably specialized in the import of nuclear encoded non-photosynthetic preproteins from the cytoplasm to the chloroplast. This is Translocase of chloroplast 125, chloroplastic from Physcomitrium patens (Spreading-leaved earth moss).